Here is a 670-residue protein sequence, read N- to C-terminus: MESIIQQINQLRTSLRHHEHQYHVLDAPEIPDAEYDRMMQQLRDLEAQHPELVTNDSPTQRVGAAPLDAFEQVKHEVPMLSLDNVFDEESYLAFDKRVHDRLKTAEPLTFCCELKLDGLAVSLLYENGELVRAATRGDGTTGENITANVRTIRAIPLRLHGDNVPRRVEVRGEVFMPQAGFEQLNEEARRKGGKVFANPRNAAAGSLRQLDPRITAKRPLTFFCYGVGLLDGGELPRSHIQCLMQFKAWGLPVSERVKLCTGSDQVIAFYRQIEQDRAGLGFDIDGVVIKVDDLVLQEQLGFVARAPRWATAFKFPAQEQITQVREVEFQVGRTGAITPVARLEPVQVAGVIVSNATLHNADEIERLGLRIGDTVIVRRAGDVIPQVVGVVMEQRPDDTKEITFPSQCPVCGSDIERVEGEAVARCTGGLFCAAQRKEALKHFVSRRALDVDGMGDKIIEQLVEKQYVENPADLFQLTAGKLTGLDRMGPKSAQNLIAALEKAKQTTFARFLYALGIREVGEATAANLAAHFRTLDNLRAADIETLKSVPDVGEVVAKHVMNFLSEEHNQKVIEELEKVVSWPEPQQIVVEEIDSPFAGKTVVLTGSLTILSRDEAKDRLTALGAKVSGSVSKKTHLVIAGEAAGSKLAKAQELGIKVIDEAEMIRLLGE.

NAD(+) is bound by residues Asp32–Asp36, Ser81–Leu82, and Glu113. Lys115 (N6-AMP-lysine intermediate) is an active-site residue. NAD(+) contacts are provided by Arg136, Glu173, Lys290, and Lys314. 4 residues coordinate Zn(2+): Cys408, Cys411, Cys426, and Cys432. Residues Glu592–Glu670 enclose the BRCT domain.

The protein belongs to the NAD-dependent DNA ligase family. LigA subfamily. Mg(2+) serves as cofactor. It depends on Mn(2+) as a cofactor.

It catalyses the reaction NAD(+) + (deoxyribonucleotide)n-3'-hydroxyl + 5'-phospho-(deoxyribonucleotide)m = (deoxyribonucleotide)n+m + AMP + beta-nicotinamide D-nucleotide.. DNA ligase that catalyzes the formation of phosphodiester linkages between 5'-phosphoryl and 3'-hydroxyl groups in double-stranded DNA using NAD as a coenzyme and as the energy source for the reaction. It is essential for DNA replication and repair of damaged DNA. This chain is DNA ligase, found in Yersinia pseudotuberculosis serotype IB (strain PB1/+).